The chain runs to 579 residues: Phosphatidylinositol/phosphatidylcholine transfer protein SFH9 (579 aa).

In terms of domain architecture, CRAL-TRIO spans 145 to 319; it reads EYEEVQQYYP…FLGGNCKCAH (175 aa). The interval 372–419 is disordered; that stretch reads DMSSPDGGHVRERESHPEHDKRAQLSNQAEAVGVGRMEQSDSTSPLPN. The segment covering 379–394 has biased composition (basic and acidic residues); the sequence is GHVRERESHPEHDKRA. Residues 512-539 are a coiled coil; it reads QEKEDILRDSLDRIKSIEQDLQKTKKAL.

This sequence belongs to the SFH family.

The protein resides in the golgi apparatus membrane. Its subcellular location is the cell membrane. Required for transport of secretory proteins from the Golgi complex. Catalyzes the transfer of phosphatidylinositol and phosphatidylcholine between membranes in vitro. This chain is Phosphatidylinositol/phosphatidylcholine transfer protein SFH9 (SFH9), found in Arabidopsis thaliana (Mouse-ear cress).